We begin with the raw amino-acid sequence, 887 residues long: MAESIRTFSLQWRILSLIIALLVYFPILSGSYFKPFNVSYDHRALIIAGKRRMLVSAGIHYPRATPEMWSDLIAKSKEGGADVVQTYVFWNGHEPVKGQYNFEGRYDLVKFVKLIGSSGLYLHLRIGPYVCAEWNFGGFPVWLRDIPGIEFRTDNEPFKKEMQKFVTKIVDLMREAKLFCWQGGPIIMLQIENEYGDVEKSYGQKGKDYVKWAASMALGLGAGVPWVMCKQTDAPENIIDACNGYYCDGFKPNSRTKPVLWTEDWDGWYTKWGGSLPHRPAEDLAFAVARFYQRGGSFQNYYMYFGGTNFGRTSGGPFYITSYDYDAPLDEYGLRSEPKWGHLKDLHAAIKLCEPALVAADAPQYRKLGSKQEAHIYHGDGETGGKVCAAFLANIDEHKSAHVKFNGQSYTLPPWSVSILPDCRHVAFNTAKVGAQTSVKTVESARPSLGSMSILQKVVRQDNVSYISKSWMALKEPIGIWGENNFTFQGLLEHLNVTKDRSDYLWHKTRISVSEDDISFWKKNGPNSTVSIDSMRDVLRVFVNKQLAGSIVGHWVKAVQPVRFIQGNNDLLLLTQTVGLQNYGAFLEKDGAGFRGKAKLTGFKNGDLDLSKSSWTYQVGLKGEADKIYTVEHNEKAEWSTLETDASPSIFMWYKTYFDPPAGTDPVVLNLESMGRGQAWVNGQHIGRYWNIISQKDGCDRTCDYRGAYNSDKCTTNCGKPTQTRYHVPRSWLKPSSNLLVLFEETGGNPFKISVKTVTAGILCGQVSESHYPPLRKWSTPDYINGTMSINSVAPEVHLHCEDGHVISSIEFASYGTPRGSCDGFSIGKCHASNSLSIVSEACKGRNSCFIEVSNTAFISDPCSGTLKTLAVMSRCSPSQNMSDLSF.

The first 30 residues, 1 to 30 (MAESIRTFSLQWRILSLIIALLVYFPILSG), serve as a signal peptide directing secretion. A glycan (N-linked (GlcNAc...) asparagine) is linked at Asn-37. Glu-194 acts as the Proton donor in catalysis. Residue Glu-263 is the Nucleophile of the active site. Residues Asn-463, Asn-485, Asn-496, Asn-527, and Asn-785 are each glycosylated (N-linked (GlcNAc...) asparagine). Residues 791–877 (NSVAPEVHLH…KTLAVMSRCS (87 aa)) form the SUEL-type lectin domain. N-linked (GlcNAc...) asparagine glycosylation occurs at Asn-881.

The protein belongs to the glycosyl hydrolase 35 family. In terms of tissue distribution, ubiquitous, with higher expression levels in siliques.

It localises to the secreted. The protein localises to the extracellular space. Its subcellular location is the apoplast. It carries out the reaction Hydrolysis of terminal non-reducing beta-D-galactose residues in beta-D-galactosides.. The chain is Beta-galactosidase 9 (BGAL9) from Arabidopsis thaliana (Mouse-ear cress).